The primary structure comprises 77 residues: Large ribosomal subunit protein uL29 (77 aa).

The protein belongs to the universal ribosomal protein uL29 family.

In Mycobacterium sp. (strain JLS), this protein is Large ribosomal subunit protein uL29.